The chain runs to 178 residues: Ribulose bisphosphate carboxylase small subunit, chloroplastic (178 aa).

A chloroplast-targeting transit peptide spans 1-54 (MASISSSVATVSRTAPAQANMVAPFTGLKSNAAFPTTKKANDFSTLPSNGGRVQ).

This sequence belongs to the RuBisCO small chain family. As to quaternary structure, heterohexadecamer of 8 large and 8 small subunits.

It localises to the plastid. Its subcellular location is the chloroplast. Its function is as follows. RuBisCO catalyzes two reactions: the carboxylation of D-ribulose 1,5-bisphosphate, the primary event in carbon dioxide fixation, as well as the oxidative fragmentation of the pentose substrate. Both reactions occur simultaneously and in competition at the same active site. Although the small subunit is not catalytic it is essential for maximal activity. This is Ribulose bisphosphate carboxylase small subunit, chloroplastic from Helianthus annuus (Common sunflower).